We begin with the raw amino-acid sequence, 608 residues long: MEEEKVRVRLVFEDRRILSKYQKKQGLTRSWVVLNRKCHRTISEFSDHIFHTFSLCEACPHGLSLSMEGFVLPPFESSCVLKDKDIVCVKKKKESLLEIVGEDSDENVYNAIEVEERPQIRPGEMLLANEEFQKETGGYESESEEDELEEEAEEFVPEKKASKKRKTSSKNQSTKRKKCKLDTTEESPDERENTAVVSNVVKKKKKKKSLDVQSANNDEQNNDSTKPMTKSKRSSQQEESKEHNDLCQLSAETKKTPSRSARRKKAKRQWLREKTKLEKEELLQTQLVVAPSQKPVITIDHQATKEKHCETLENQQAEEVSDGFGDEVVPVEVRPGHIRFKPLAGTDEASLDSEPLVENVLWNGNMTKKKGQKWGTEKSGFSKRYAQDFNEDATTQPAEAETLANCPIDYEQLVAYTGSVKKGDVIAYRLIELTSSWTPEVSSFRVGKISYYDPDSKMVTLMPVQEFPIEKKTEEDDDFCMQPDTSLYKEDGSLEIEFSALLDVRSVKTSSSDSAEVAKSALPEPDQSAKKPKLSANKELQTPAKENGEVSPWEELSEALSAKKAALSQANNGWNKKGSSSGGSWSYKALRGSAMGPVMNYLRSQKEI.

The interval 134–272 (KETGGYESES…RKKAKRQWLR (139 aa)) is disordered. Over residues 141 to 155 (SESEEDELEEEAEEF) the composition is skewed to acidic residues. Basic residues predominate over residues 161-179 (ASKKRKTSSKNQSTKRKKC). A Nuclear localization signal 1 motif is present at residues 163 to 170 (KKRKTSSK). A Phosphoserine modification is found at Ser187. The segment covering 211-228 (DVQSANNDEQNNDSTKPM) has biased composition (polar residues). Residues 235 to 245 (SQQEESKEHND) are compositionally biased toward basic and acidic residues. The Nuclear localization signal 2 signature appears at 253–260 (TKKTPSRS). Basic residues predominate over residues 256–269 (TPSRSARRKKAKRQ). Residues 410–510 (YEQLVAYTGS…LLDVRSVKTS (101 aa)) enclose the Tudor; atypical domain. The interval 513–585 (DSAEVAKSAL…KKGSSSGGSW (73 aa)) is disordered. The span at 558 to 585 (EALSAKKAALSQANNGWNKKGSSSGGSW) shows a compositional bias: low complexity.

The protein belongs to the coilin family. Homooligomer. Interaction with RNA results in multimerization due to structural alteration in the NOD domain.

It is found in the nucleus. Its subcellular location is the cajal body. Its function is as follows. Probable component of nuclear coiled bodies, also known as Cajal bodies or CBs, which are involved in the modification and assembly of nucleoplasmic snRNPs. Required for CBs formation. Binds snRNAs and non-specific artificial RNA via the N-terminal part of the NOD domain and via the NLS2 region (212-282) of the IDD domain. The two sites are able to function independently and provide effective RNA-binding in a non-cooperative manner. The protein is Coilin of Arabidopsis thaliana (Mouse-ear cress).